A 234-amino-acid polypeptide reads, in one-letter code: GTP-binding protein ypt4 (234 aa).

Glycine 16–serine 23 contacts GTP. Residues serine 39–alanine 47 carry the Effector region motif. Aspartate 68–glutamine 72 contributes to the GTP binding site. S-geranylgeranyl cysteine attachment occurs at residues cysteine 233 and cysteine 234.

This sequence belongs to the small GTPase superfamily. Rab family.

The protein localises to the cell membrane. This is GTP-binding protein ypt4 (ypt4) from Schizosaccharomyces pombe (strain 972 / ATCC 24843) (Fission yeast).